We begin with the raw amino-acid sequence, 436 residues long: GTPase Der (436 aa).

EngA-type G domains are found at residues 4 to 167 (PTVA…PVEE) and 175 to 351 (IRFS…ESQN). GTP contacts are provided by residues 10-17 (GRPNVGKS), 57-61 (DTGGI), 119-122 (NKVD), 181-188 (GRPNVGKS), 229-233 (DTAGM), and 294-297 (NKWD). The KH-like domain maps to 352–436 (KRIPSAVLND…PIHLIARKRK (85 aa)).

Belongs to the TRAFAC class TrmE-Era-EngA-EngB-Septin-like GTPase superfamily. EngA (Der) GTPase family. As to quaternary structure, associates with the 50S ribosomal subunit.

Functionally, GTPase that plays an essential role in the late steps of ribosome biogenesis. This chain is GTPase Der, found in Streptococcus uberis (strain ATCC BAA-854 / 0140J).